The chain runs to 110 residues: Iron-sulfur cluster assembly protein CyaY (110 aa).

Belongs to the frataxin family.

Its function is as follows. Involved in iron-sulfur (Fe-S) cluster assembly. May act as a regulator of Fe-S biogenesis. The protein is Iron-sulfur cluster assembly protein CyaY of Variovorax paradoxus (strain S110).